Here is a 608-residue protein sequence, read N- to C-terminus: Chaperone protein HtpG (608 aa).

Positions 1–332 (MQFQTEVNQL…VEDLPLNVSR (332 aa)) are a; substrate-binding. A b region spans residues 333 to 536 (EILQENQILK…KNKPDFAMQQ (204 aa)). The segment at 537–608 (LLKQMGQEQN…LTKIINKAFS (72 aa)) is c.

This sequence belongs to the heat shock protein 90 family. As to quaternary structure, homodimer.

It localises to the cytoplasm. In terms of biological role, molecular chaperone. Has ATPase activity. This chain is Chaperone protein HtpG, found in Campylobacter jejuni (strain RM1221).